The following is a 270-amino-acid chain: Shikimate dehydrogenase (NADP(+)) (270 aa).

Shikimate contacts are provided by residues 14-16 (SKS) and T61. The Proton acceptor role is filled by K65. N86 and D101 together coordinate shikimate. NADP(+)-binding positions include 126–130 (GAGGA), 150–155 (NRTVDK), and M215. Residue Y217 coordinates shikimate. Residue G238 coordinates NADP(+).

This sequence belongs to the shikimate dehydrogenase family. In terms of assembly, homodimer.

It carries out the reaction shikimate + NADP(+) = 3-dehydroshikimate + NADPH + H(+). It participates in metabolic intermediate biosynthesis; chorismate biosynthesis; chorismate from D-erythrose 4-phosphate and phosphoenolpyruvate: step 4/7. Involved in the biosynthesis of the chorismate, which leads to the biosynthesis of aromatic amino acids. Catalyzes the reversible NADPH linked reduction of 3-dehydroshikimate (DHSA) to yield shikimate (SA). The sequence is that of Shikimate dehydrogenase (NADP(+)) from Methylobacillus flagellatus (strain ATCC 51484 / DSM 6875 / VKM B-1610 / KT).